A 137-amino-acid chain; its full sequence is Proofreading thioesterase EntH (137 aa).

Glu-63 functions as the Nucleophile or proton acceptor in the catalytic mechanism.

Belongs to the thioesterase PaaI family. Homotetramer. Dimer of dimers. Interacts specifically with the aryl carrier protein (ArCP) domain of EntB.

Its subcellular location is the cytoplasm. Its pathway is siderophore biosynthesis; enterobactin biosynthesis. Required for optimal enterobactin synthesis. Acts as a proofreading enzyme that prevents EntB misacylation by hydrolyzing the thioester bound existing between EntB and wrongly charged molecules. This chain is Proofreading thioesterase EntH, found in Citrobacter koseri (strain ATCC BAA-895 / CDC 4225-83 / SGSC4696).